The chain runs to 309 residues: Ribosomal RNA small subunit methyltransferase H (309 aa).

S-adenosyl-L-methionine-binding positions include 44 to 46 (GGH), D62, F102, D118, and Q125. Positions 289–309 (LEQQRNSRARSAKLRVAARSS) are disordered.

It belongs to the methyltransferase superfamily. RsmH family.

Its subcellular location is the cytoplasm. It catalyses the reaction cytidine(1402) in 16S rRNA + S-adenosyl-L-methionine = N(4)-methylcytidine(1402) in 16S rRNA + S-adenosyl-L-homocysteine + H(+). Its function is as follows. Specifically methylates the N4 position of cytidine in position 1402 (C1402) of 16S rRNA. In Synechococcus sp. (strain JA-3-3Ab) (Cyanobacteria bacterium Yellowstone A-Prime), this protein is Ribosomal RNA small subunit methyltransferase H.